The chain runs to 449 residues: Malonyl-CoA:anthocyanidin 5-O-glucoside-6''-O-malonyltransferase (449 aa).

Met1 carries the N-acetylmethionine modification. Active-site proton acceptor residues include His162 and Asp394.

Belongs to the plant acyltransferase family. In terms of tissue distribution, expressed in flowers. Detected in leaves, stems, roots and siliques.

It carries out the reaction anthocyanin A3 + malonyl-CoA = anthocyanin A5 + CoA. It catalyses the reaction anthocyanin A7 + malonyl-CoA = anthocyanin A9 + CoA. The catalysed reaction is anthocyanin A6 + malonyl-CoA = anthocyanin A8 + CoA. The enzyme catalyses anthocyanin A10 + malonyl-CoA = anthocyanin A11 + CoA. Functionally, catalyzes the malonylation of the 5-O-glucose residue of anthocyanins, using malonyl-CoA as the malonyl donor. Acts only on anthocyanin substrates containing a 5-O-glucosyl moiety. Acts on the four native A.thaliana anthocyanins, A3, A7, and to a lesser extent, A6 and A10. Can also use the non-native anthocyanin compounds cyanin (cyanidin 3,5-diglucoside), malvin, pelargonidin 3,5-diglucoside, peonidin 3,5-diglucoside, cyanidin 3-coumaroylglucoside 5-glucoside, delphinidin 3-coumaroylrutinoside 5-glucoside and petunidin 3-coumaroylrutinoside 5-glucoside as substrates. Is the sole enzyme responsible for producing malonylated anthocyanin 5-O-glucosides in A.thaliana. Is not able to catalyze acyl transfer using acetyl-CoA, butyryl-CoA, hexanoyl-CoA, benzoyl-CoA, cinnamoyl-CoA, methylmalonyl-CoA, succinyl-CoA, p-coumaroyl-CoA or caffeoyl-CoA. The polypeptide is Malonyl-CoA:anthocyanidin 5-O-glucoside-6''-O-malonyltransferase (5MAT) (Arabidopsis thaliana (Mouse-ear cress)).